The chain runs to 648 residues: Calpain-5 (648 aa).

In terms of domain architecture, Calpain catalytic spans Pro28 to Phe353. Residues Cys83, His252, and Asn290 contribute to the active site. The segment at Asn354–Ser509 is domain III. Positions Ser502 to Thr625 constitute a C2 domain.

This sequence belongs to the peptidase C2 family. It depends on Ca(2+) as a cofactor. Expressed in neuronal, but not in GABA-ergic neurons, intestinal, hypodermal and excretory tissues.

In terms of biological role, required for the correct female sexual development of the soma and germline in hermaphrodite animals, while being fully dispensable in males. Has calcium-dependent proteolytic activity and is involved in the cleavage of tra-2, for which it acts as a potentiator. Capable of calcium-dependent autolysis. Part of the necrosis cell death pathway. Required for necrosis of intestinal cells induced by B.thuringiensis endotoxin Cry6Aa. The sequence is that of Calpain-5 from Caenorhabditis elegans.